Reading from the N-terminus, the 220-residue chain is Small ribosomal subunit protein eS8 (220 aa).

Disordered regions lie at residues 1-41 (MGIS…LSSN) and 131-151 (AKKDAEGQDAEATTEEAKKSN). The span at 8-26 (MHKRRATGGKQKAWRKKRK) shows a compositional bias: basic residues.

It belongs to the eukaryotic ribosomal protein eS8 family.

This Oryza sativa subsp. japonica (Rice) protein is Small ribosomal subunit protein eS8 (RPS8).